Here is a 207-residue protein sequence, read N- to C-terminus: Cytochrome c biogenesis ATP-binding export protein CcmA (207 aa).

One can recognise an ABC transporter domain in the interval 4–207 (LEVRELLCER…RISLTQTRAV (204 aa)). Residue 36–43 (GSNGAGKT) coordinates ATP.

It belongs to the ABC transporter superfamily. CcmA exporter (TC 3.A.1.107) family. As to quaternary structure, the complex is composed of two ATP-binding proteins (CcmA) and two transmembrane proteins (CcmB).

The protein localises to the cell inner membrane. It carries out the reaction heme b(in) + ATP + H2O = heme b(out) + ADP + phosphate + H(+). Its function is as follows. Part of the ABC transporter complex CcmAB involved in the biogenesis of c-type cytochromes; once thought to export heme, this seems not to be the case, but its exact role is uncertain. Responsible for energy coupling to the transport system. The polypeptide is Cytochrome c biogenesis ATP-binding export protein CcmA (Shigella dysenteriae serotype 1 (strain Sd197)).